Here is a 335-residue protein sequence, read N- to C-terminus: Transcriptional adapter 1 (335 aa).

The disordered stretch occupies residues 83 to 103 (LPWPGGSAAKPGKPKGKKKLS). Positions 84–93 (PWPGGSAAKP) are enriched in low complexity. The span at 94–103 (GKPKGKKKLS) shows a compositional bias: basic residues.

This sequence belongs to the TADA1 family. Component of the STAGA transcription coactivator-HAT complex, at least composed of SUPT3H, GCN5L2, TAF5L, TAF6L, SUPT7L, TADA3L, TAD1L, TAF10, TAF12, TRRAP and TAF9.

It localises to the nucleus. In terms of biological role, probably involved in transcriptional regulation. The chain is Transcriptional adapter 1 (TADA1) from Homo sapiens (Human).